Consider the following 778-residue polypeptide: ATP synthase subunit beta (778 aa).

The unknown stretch occupies residues 1 to 289 (MKENNKTIEA…IDIYEENEDL (289 aa)). The interval 290–778 (MKLNTLKSDK…KPLNSENKSN (489 aa)) is ATP synthase subunit beta. Position 447–454 (447–454 (GGAGVGKT)) interacts with ATP.

This sequence belongs to the ATPase alpha/beta chains family. In terms of assembly, F-type ATPases have 2 components, CF(1) - the catalytic core - and CF(0) - the membrane proton channel. CF(1) has five subunits: alpha(3), beta(3), gamma(1), delta(1), epsilon(1). CF(0) has three main subunits: a(1), b(2) and c(9-12). The alpha and beta chains form an alternating ring which encloses part of the gamma chain. CF(1) is attached to CF(0) by a central stalk formed by the gamma and epsilon chains, while a peripheral stalk is formed by the delta and b chains.

It is found in the cell membrane. The catalysed reaction is ATP + H2O + 4 H(+)(in) = ADP + phosphate + 5 H(+)(out). In terms of biological role, produces ATP from ADP in the presence of a proton gradient across the membrane. The catalytic sites are hosted primarily by the beta subunits. The polypeptide is ATP synthase subunit beta (atpD) (Malacoplasma penetrans (strain HF-2) (Mycoplasma penetrans)).